A 387-amino-acid chain; its full sequence is MRKKLTALVLSALPLAAVADVSLYGEIKAGVEGRNFQLQLTEPPSKSQPQVKVTKAKSRIRTKISDFGSFIGFKGSEDLGEGLKAVWQLEQDVSVAGGGATQWGNRESFVGLAGEFGTLRAGRVANQFDDASQAIDPWDSNNDVASQLGIFKRHDDMPVSVRYDSPDFSGFSGSVQFVPIQNSKSAYTPAHYTRQNNTDVFVPAVVGKPGSDVYYAGLNYKNGGFAGSYAFKYARHANVGRDAFELFLLGSTSDEAKGTDPLKNHQVHRLTGGYEEGGLNLALAAQLDLSENGDKAKTKNSTTEIAATASYRFGNAVPRISYAHGFDLIERGKKGENTSYDQIIAGVDYDFSKRTSAIVSGAWLKRNTGIGNYTQINAASVGLRHKF.

The N-terminal stretch at 1–19 is a signal peptide; the sequence is MRKKLTALVLSALPLAAVA.

Belongs to the Gram-negative porin family. Homotrimer.

It localises to the cell outer membrane. Its function is as follows. Serves as a slightly cation selective porin. Major antigen on the gonococcal cell surface and it may have pathogenic properties in addition to its porin activity. The sequence is that of Major outer membrane protein P.IA (porA) from Neisseria meningitidis serogroup C.